The chain runs to 197 residues: UPF0637 protein LEUM_0496 (197 aa).

This sequence belongs to the UPF0637 family.

The chain is UPF0637 protein LEUM_0496 from Leuconostoc mesenteroides subsp. mesenteroides (strain ATCC 8293 / DSM 20343 / BCRC 11652 / CCM 1803 / JCM 6124 / NCDO 523 / NBRC 100496 / NCIMB 8023 / NCTC 12954 / NRRL B-1118 / 37Y).